A 446-amino-acid polypeptide reads, in one-letter code: 3-phosphoshikimate 1-carboxyvinyltransferase (446 aa).

Lysine 26, serine 27, and arginine 31 together coordinate 3-phosphoshikimate. Residue lysine 26 participates in phosphoenolpyruvate binding. Phosphoenolpyruvate-binding residues include glycine 100 and arginine 128. 3-phosphoshikimate is bound by residues serine 171, serine 172, glutamine 173, serine 200, glutamate 315, and histidine 344. Phosphoenolpyruvate is bound at residue glutamine 173. Glutamate 315 functions as the Proton acceptor in the catalytic mechanism. Phosphoenolpyruvate-binding residues include arginine 348, arginine 389, and lysine 414.

Belongs to the EPSP synthase family. Monomer.

It localises to the cytoplasm. It carries out the reaction 3-phosphoshikimate + phosphoenolpyruvate = 5-O-(1-carboxyvinyl)-3-phosphoshikimate + phosphate. Its pathway is metabolic intermediate biosynthesis; chorismate biosynthesis; chorismate from D-erythrose 4-phosphate and phosphoenolpyruvate: step 6/7. In terms of biological role, catalyzes the transfer of the enolpyruvyl moiety of phosphoenolpyruvate (PEP) to the 5-hydroxyl of shikimate-3-phosphate (S3P) to produce enolpyruvyl shikimate-3-phosphate and inorganic phosphate. The protein is 3-phosphoshikimate 1-carboxyvinyltransferase of Mycolicibacterium gilvum (strain PYR-GCK) (Mycobacterium gilvum (strain PYR-GCK)).